The following is a 191-amino-acid chain: Nucleoside triphosphate pyrophosphatase (191 aa).

Aspartate 70 (proton acceptor) is an active-site residue.

This sequence belongs to the Maf family. Requires a divalent metal cation as cofactor.

The protein resides in the cytoplasm. It catalyses the reaction a ribonucleoside 5'-triphosphate + H2O = a ribonucleoside 5'-phosphate + diphosphate + H(+). The catalysed reaction is a 2'-deoxyribonucleoside 5'-triphosphate + H2O = a 2'-deoxyribonucleoside 5'-phosphate + diphosphate + H(+). Nucleoside triphosphate pyrophosphatase. May have a dual role in cell division arrest and in preventing the incorporation of modified nucleotides into cellular nucleic acids. The protein is Nucleoside triphosphate pyrophosphatase of Synechococcus sp. (strain WH7803).